Here is a 69-residue protein sequence, read N- to C-terminus: DNA-directed RNA polymerase subunit omega (69 aa).

The protein belongs to the RNA polymerase subunit omega family. The RNAP catalytic core consists of 2 alpha, 1 beta, 1 beta' and 1 omega subunit. When a sigma factor is associated with the core the holoenzyme is formed, which can initiate transcription.

It carries out the reaction RNA(n) + a ribonucleoside 5'-triphosphate = RNA(n+1) + diphosphate. Promotes RNA polymerase assembly. Latches the N- and C-terminal regions of the beta' subunit thereby facilitating its interaction with the beta and alpha subunits. The sequence is that of DNA-directed RNA polymerase subunit omega from Pediococcus pentosaceus (strain ATCC 25745 / CCUG 21536 / LMG 10740 / 183-1w).